The following is a 305-amino-acid chain: MSQGEAWADAFLEMMAVERAAARNTLTAYGKDLEDARGFLSRSGHDLHDADAETIEAYFQDLGARGLSPATAARRRSAVRQFYRFVLGEGWRTDDPSRRVAAPKAGRPLPKVLERDEIERLLAAASAKDSAQGLRLACMIELIYASGLRISELLALPLLALARDPAYLIVKGKGGKERLAPLNDAARAAVKAYLVERPAFLPKGQKDSPWLFPSRGATGRLTPRRVGQLLEDAAIAAGIDRQKVSPHVLRHAFATHLLEGGADLRVIQTLLGHADIATTQIYTHVAGEHLAHIVQTKHPLGRKKG.

The Core-binding (CB) domain maps to 2 to 87 (SQGEAWADAF…AVRQFYRFVL (86 aa)). One can recognise a Tyr recombinase domain in the interval 108 to 295 (PLPKVLERDE…AGEHLAHIVQ (188 aa)). Catalysis depends on residues Arg149, Lys173, His247, Arg250, and His273. The active-site O-(3'-phospho-DNA)-tyrosine intermediate is Tyr282.

Belongs to the 'phage' integrase family. XerD subfamily. In terms of assembly, forms a cyclic heterotetrameric complex composed of two molecules of XerC and two molecules of XerD.

Its subcellular location is the cytoplasm. Its function is as follows. Site-specific tyrosine recombinase, which acts by catalyzing the cutting and rejoining of the recombining DNA molecules. The XerC-XerD complex is essential to convert dimers of the bacterial chromosome into monomers to permit their segregation at cell division. It also contributes to the segregational stability of plasmids. In Caulobacter vibrioides (strain ATCC 19089 / CIP 103742 / CB 15) (Caulobacter crescentus), this protein is Tyrosine recombinase XerD.